A 524-amino-acid chain; its full sequence is Cytochrome P450 monooxygenase ankB (524 aa).

A helical transmembrane segment spans residues 22–42; sequence FHALSIQAPGLLLGTLLFYLF. Residue cysteine 466 coordinates heme.

Belongs to the cytochrome P450 family. Heme is required as a cofactor.

It is found in the membrane. It catalyses the reaction cyclo(L-arginyl-tyrosyl) + reduced [NADPH--hemoprotein reductase] + O2 = cyclo(L-arginyl-L-dehydrotyrosyl) + oxidized [NADPH--hemoprotein reductase] + 2 H2O + H(+). It participates in alkaloid biosynthesis. In terms of biological role, cytochrome P450 monooxygenase; part of the ank cluster that mediates the biosynthesis of NK13650 C, a highly modified cyclo-arginine-tyrosine dipeptide. AnkB is responsible for desaturation of the ankA product cyclo-Arg-Tyr diketopiperazine, likely through hydroxylation of the benzylic position followed by dehydration to yield a dehydro-cyclodipeptide. Within the pathway, the cyclodipeptide synthase ankA acts as the scaffold-generating enzyme and is responsible for formation of the cyclo-Arg-Tyr diketopiperazine (cRY) from L-Arg and L-Tyr. The ankA product cRY is desaturated by the cytochrome P450 monooxygenase ankB to yield a dehydro-cyclodipeptide intermediate. The FAD-dependent monooxygenase ankC then installs the m-OH, ankD catalyzes the attachment of L-homoserine, and ankE ligates citrate to the ankD product to yield NK13650 B. The O-methyltransferase ankF is responsible for methylation of the C-17 phenol group of NK13650 B to produce NK13650 D. Amidation of NK13650 D with L-Asp by ankG then leads to the production of NK13650 C, whereas amidation of NK13650 B produces NK13650 A. This Aspergillus thermomutatus (Neosartorya pseudofischeri) protein is Cytochrome P450 monooxygenase ankB.